The chain runs to 239 residues: Serine protease SplF (239 aa).

An N-terminal signal peptide occupies residues 1–36; that stretch reads MNKNIIIKSIGALTILTSITGVGTTMVEGIQQTAKA. Residues histidine 75, aspartate 114, and serine 192 each act as charge relay system in the active site.

The protein belongs to the peptidase S1B family.

It localises to the secreted. This chain is Serine protease SplF (splF), found in Staphylococcus aureus (strain USA300).